Reading from the N-terminus, the 328-residue chain is MKAPVRVAVTGAAGQIGYALLFRIASGEMLGKDQPVILQLLELPVDKAQAALKGVMMELEDCAFPLLAGMVGTDDAEVAFKDADIALLVGARPRGPGMERKDLLLENAKIFTAQGAALNKVASRDVKVLVVGNPANTNAYIAMKSAPDLKPENFTAMLRLDHNRALSQLSAKLGKPVGGMEKLVVWGNHSPTMYPDYRFATADGASIADAINDQEWNANTFIPTVGKRGAAIIEARGSSSAASAANAAIDHVRDWVLGSNGKWVTMGVPSDGSYGIPEGVIFGFAVTTENGKYTLVKDLPVDDFSQKYIDKTLAELEEERSGVAHLLG.

Gly-11 to Gly-17 contributes to the NAD(+) binding site. The substrate site is built by Arg-94 and Arg-100. Residues Asn-107, Gln-114, and Val-131–Asn-133 contribute to the NAD(+) site. Positions 133 and 164 each coordinate substrate. His-189 serves as the catalytic Proton acceptor.

It belongs to the LDH/MDH superfamily. MDH type 2 family.

The catalysed reaction is (S)-malate + NAD(+) = oxaloacetate + NADH + H(+). Catalyzes the reversible oxidation of malate to oxaloacetate. In Stenotrophomonas maltophilia (strain R551-3), this protein is Malate dehydrogenase.